Consider the following 170-residue polypeptide: MSQLPLELGLSFNGGDILFQLLAMLVLLALLKKFALGPLLNIMKQREDHIAGEITSAEERNKEAQKLIEEQRVLLKEAKQESQSLIENAKKLGEKQKEDIIQAARAESERLKEAARTEIVKEKEQAVSALREQVASLSVLIASKVIEKELDEQAQEQLIQDYLKEVGESR.

Residues 20–42 (QLLAMLVLLALLKKFALGPLLNI) form a helical membrane-spanning segment.

The protein belongs to the ATPase B chain family. In terms of assembly, F-type ATPases have 2 components, F(1) - the catalytic core - and F(0) - the membrane proton channel. F(1) has five subunits: alpha(3), beta(3), gamma(1), delta(1), epsilon(1). F(0) has three main subunits: a(1), b(2) and c(10-14). The alpha and beta chains form an alternating ring which encloses part of the gamma chain. F(1) is attached to F(0) by a central stalk formed by the gamma and epsilon chains, while a peripheral stalk is formed by the delta and b chains.

The protein resides in the cell membrane. F(1)F(0) ATP synthase produces ATP from ADP in the presence of a proton or sodium gradient. F-type ATPases consist of two structural domains, F(1) containing the extramembraneous catalytic core and F(0) containing the membrane proton channel, linked together by a central stalk and a peripheral stalk. During catalysis, ATP synthesis in the catalytic domain of F(1) is coupled via a rotary mechanism of the central stalk subunits to proton translocation. Its function is as follows. Component of the F(0) channel, it forms part of the peripheral stalk, linking F(1) to F(0). In Bacillus velezensis (strain DSM 23117 / BGSC 10A6 / LMG 26770 / FZB42) (Bacillus amyloliquefaciens subsp. plantarum), this protein is ATP synthase subunit b.